We begin with the raw amino-acid sequence, 471 residues long: Putative ETHYLENE INSENSITIVE 3-like 4 protein (471 aa).

The segment at 280–316 (DLKISEDQDDQESSGSKRKSESMEPSKSVYTCQNSSC) is disordered. The span at 304–316 (PSKSVYTCQNSSC) shows a compositional bias: polar residues.

This sequence belongs to the EIN3 family.

The protein localises to the nucleus. Putative transcription factor that may be involved in the ethylene response pathway. The protein is Putative ETHYLENE INSENSITIVE 3-like 4 protein (EIL4) of Arabidopsis thaliana (Mouse-ear cress).